The primary structure comprises 316 residues: Aspartate carbamoyltransferase catalytic subunit (316 aa).

The carbamoyl phosphate site is built by Arg60 and Thr61. Lys88 is a binding site for L-aspartate. The carbamoyl phosphate site is built by Arg110, His138, and Gln141. The L-aspartate site is built by Arg171 and Arg225. Carbamoyl phosphate-binding residues include Gly266 and Pro267.

This sequence belongs to the aspartate/ornithine carbamoyltransferase superfamily. ATCase family. Heterododecamer (2C3:3R2) of six catalytic PyrB chains organized as two trimers (C3), and six regulatory PyrI chains organized as three dimers (R2).

The catalysed reaction is carbamoyl phosphate + L-aspartate = N-carbamoyl-L-aspartate + phosphate + H(+). It participates in pyrimidine metabolism; UMP biosynthesis via de novo pathway; (S)-dihydroorotate from bicarbonate: step 2/3. In terms of biological role, catalyzes the condensation of carbamoyl phosphate and aspartate to form carbamoyl aspartate and inorganic phosphate, the committed step in the de novo pyrimidine nucleotide biosynthesis pathway. This chain is Aspartate carbamoyltransferase catalytic subunit, found in Rhizorhabdus wittichii (strain DSM 6014 / CCUG 31198 / JCM 15750 / NBRC 105917 / EY 4224 / RW1) (Sphingomonas wittichii).